The sequence spans 831 residues: V-type proton ATPase 116 kDa subunit a1 (831 aa).

Over 1-388 the chain is Cytoplasmic; sequence MGELFRSEEM…DAYGIGSYRE (388 aa). Residues 389–407 traverse the membrane as a helical segment; sequence INPAPYTIITFPFLFAVMF. The Vacuolar portion of the chain corresponds to 408–409; it reads GD. A helical membrane pass occupies residues 410–426; it reads FGHGILMTLFAVWMVVR. Residues 427 to 441 lie on the Cytoplasmic side of the membrane; that stretch reads ESRILSQKIDNELFS. A helical transmembrane segment spans residues 442–471; it reads MMFSGRYIILLMGLFSTYTGLIYNDCFSKA. The Vacuolar portion of the chain corresponds to 472 to 534; that stretch reads LNLFGSSWSV…ATNKLTFLNS (63 aa). A helical membrane pass occupies residues 535-554; the sequence is FKMKMSVILGIIHMIFGVAL. Over 555–572 the chain is Cytoplasmic; sequence SVLNHIYFKKPLNIYLSF. Residues 573-593 form a helical membrane-spanning segment; it reads IPEMIFMTTLFGYLVILIIYK. At 594-638 the chain is on the vacuolar side; sequence WCAYDVSTSMVAPSLLIHFINMFLFSYQDTSLPMLYKGQMGLQCF. A helical membrane pass occupies residues 639-658; sequence LVVCAIICVPWMLVLKPLIL. The Cytoplasmic portion of the chain corresponds to 659–718; the sequence is RRQYLRRKHLGTHNFGGIRVGNGPTEEDAEIIQHDQLSMHSDEEEEFDFGDTVVHQAIHT. A helical transmembrane segment spans residues 719–743; the sequence is IEYCLGCISNTASYLRLWALSLAHA. Over 744 to 764 the chain is Vacuolar; the sequence is QLSEVLWTMVMHIGLNIRSLG. Residues 765 to 803 traverse the membrane as a helical segment; the sequence is GGIALVFIFSAFATLTIAILLIMEGLSAFLHALRLHWVE. Residues 804-831 lie on the Cytoplasmic side of the membrane; the sequence is FRNKFYMGTGFKFLPFSFETIWEGKFDD.

This sequence belongs to the V-ATPase 116 kDa subunit family. V-ATPase is a heteromultimeric enzyme made up of two complexes: the ATP-hydrolytic V1 complex and the proton translocation V0 complex. The V1 complex consists of three catalytic AB heterodimers that form a heterohexamer, three peripheral stalks each consisting of EG heterodimers, one central rotor including subunits D and F, and the regulatory subunits C and H. The proton translocation complex V0 consists of the proton transport subunit a, a ring of proteolipid subunits c9c'', rotary subunit d, subunits e and f, and two accessory subunits.

The protein localises to the cytoplasmic vesicle. It localises to the clathrin-coated vesicle membrane. Its subcellular location is the secretory vesicle. It is found in the synaptic vesicle membrane. The protein resides in the melanosome. Its function is as follows. Subunit of the V0 complex of vacuolar(H+)-ATPase (V-ATPase), a multisubunit enzyme composed of a peripheral complex (V1) that hydrolyzes ATP and a membrane integral complex (V0) that translocates protons. V-ATPase is responsible for acidifying and maintaining the pH of intracellular compartments and in some cell types, is targeted to the plasma membrane, where it is responsible for acidifying the extracellular environment. Required for assembly and activity of the vacuolar ATPase. The polypeptide is V-type proton ATPase 116 kDa subunit a1 (atp6v0a1) (Xenopus laevis (African clawed frog)).